The sequence spans 293 residues: tRNA pseudouridine synthase A (293 aa).

Asp67 (nucleophile) is an active-site residue. Residue Tyr125 coordinates substrate.

Belongs to the tRNA pseudouridine synthase TruA family. In terms of assembly, homodimer.

It carries out the reaction uridine(38/39/40) in tRNA = pseudouridine(38/39/40) in tRNA. In terms of biological role, formation of pseudouridine at positions 38, 39 and 40 in the anticodon stem and loop of transfer RNAs. The protein is tRNA pseudouridine synthase A of Synechococcus sp. (strain CC9605).